Here is a 509-residue protein sequence, read N- to C-terminus: Proton-gated ion channel subunit pbo-5 (509 aa).

Residues 1 to 21 form the signal peptide; it reads MTRLSILQHLLTFLILSKINA. Over 22 to 275 the chain is Extracellular; sequence TSTTESYFDS…ISLKRRPLFY (254 aa). C193 and C207 are joined by a disulfide. 3 helical membrane-spanning segments follow: residues 276–296, 310–330, and 336–356; these read MVTL…GLFA, LGVT…EKVP, and VPLL…AAMT. Residues 357–487 are Cytoplasmic-facing; it reads TGIVMKVHRL…GYVRISERLD (131 aa). A helical membrane pass occupies residues 488–508; sequence ILFMFLFLSTVTIPVAVLFYL.

Belongs to the ligand-gated ion channel (TC 1.A.9) family. Acetylcholine receptor (TC 1.A.9.1) subfamily. As to quaternary structure, the functional channel is a heterooligomer of pbo-5 and pbo-6. May self-associate to form homooligomers with negligible ion channel activity. As to expression, expressed in the posterior body muscles. Also detected in the RIFL, RIFR and RIS head neurons.

Its subcellular location is the membrane. In terms of biological role, forms a proton-gated ion channel with pbo-6 that is activated by acidification of the posterior coelomic space, leading to posterior body wall muscle contraction (pBoc) during the defecation cycle. Probably by regulating the defecation motor program, required for fatty acid uptake by intestinal cells. Does not bind neurotransmitters such as acetylcholine, gamma-aminobutyric acid, glycine, serotonin, glutamate or choline. This chain is Proton-gated ion channel subunit pbo-5, found in Caenorhabditis elegans.